The chain runs to 422 residues: UDP-N-acetylglucosamine 1-carboxyvinyltransferase (422 aa).

22 to 23 is a binding site for phosphoenolpyruvate; it reads KN. Arg-92 is a UDP-N-acetyl-alpha-D-glucosamine binding site. Cys-116 (proton donor) is an active-site residue. Position 116 is a 2-(S-cysteinyl)pyruvic acid O-phosphothioketal (Cys-116). Residues 121-125, Asp-307, and Leu-329 each bind UDP-N-acetyl-alpha-D-glucosamine; that span reads RPIDL.

Belongs to the EPSP synthase family. MurA subfamily.

The protein resides in the cytoplasm. It carries out the reaction phosphoenolpyruvate + UDP-N-acetyl-alpha-D-glucosamine = UDP-N-acetyl-3-O-(1-carboxyvinyl)-alpha-D-glucosamine + phosphate. It participates in cell wall biogenesis; peptidoglycan biosynthesis. Cell wall formation. Adds enolpyruvyl to UDP-N-acetylglucosamine. This is UDP-N-acetylglucosamine 1-carboxyvinyltransferase from Sulfurovum sp. (strain NBC37-1).